A 569-amino-acid chain; its full sequence is MRFSKTFIPTMKENPKDAVLPSHIYLVRGGFITQVASGIYNFLPIGKKVLDKIRAIVKEELDKAGCQEVSLGFVTPCELWEESGRLGKYGKELLRFKDRKENCFVLGPTHEEMMVDLVRNRVTSYKQLPLNLYQINWKFRDEARPRFGLLRGREFLMKDGYSFHADEEDMRREYDLMEKTYRNIFGRLGLRFRAVEADVGAIGGNASKEFMVLAESGEDTIAICTECEYAANVEAAKRKKTKAPAEAPEFSNFEPFYTPNLSSIDELSDFFKVHPYYFVKAVAKKALYDEGEEIVLFFLRGSDELQEVKASNAIGANEMVDVSEEELEKSGIVPGFIAPYEQKCKIVLDEDLKGAKGLICGGNKKDYHLIGADLSQFDDALFVDIAQVKEGDLCPKCGAVMKLTKGIEVGHIFQLGTRYSAAMNATFLDKDGKAKPFVMGTYGIGVSRLVAASIEQNHDERGCIWPLQIAPFEVDIIVSNIKDEEQIAFGEELYEQLKNAGVDVILDDRPERFGPKIKDFELIGFPYGIIVGKGLKEGTVQIVQRETLDKVEIPKEDVFKTILEKVQAS.

The protein belongs to the class-II aminoacyl-tRNA synthetase family. ProS type 1 subfamily. In terms of assembly, homodimer.

Its subcellular location is the cytoplasm. It carries out the reaction tRNA(Pro) + L-proline + ATP = L-prolyl-tRNA(Pro) + AMP + diphosphate. Functionally, catalyzes the attachment of proline to tRNA(Pro) in a two-step reaction: proline is first activated by ATP to form Pro-AMP and then transferred to the acceptor end of tRNA(Pro). As ProRS can inadvertently accommodate and process non-cognate amino acids such as alanine and cysteine, to avoid such errors it has two additional distinct editing activities against alanine. One activity is designated as 'pretransfer' editing and involves the tRNA(Pro)-independent hydrolysis of activated Ala-AMP. The other activity is designated 'posttransfer' editing and involves deacylation of mischarged Ala-tRNA(Pro). The misacylated Cys-tRNA(Pro) is not edited by ProRS. The protein is Proline--tRNA ligase of Nitratiruptor sp. (strain SB155-2).